Here is a 254-residue protein sequence, read N- to C-terminus: Urease accessory protein UreF (254 aa).

A compositionally biased stretch (basic and acidic residues) spans 1–11 (MDKGKSVKSTE). The disordered stretch occupies residues 1–26 (MDKGKSVKSTEKSVGMPPKTPKTDNN).

This sequence belongs to the UreF family. As to quaternary structure, ureH, UreF and UreG form a complex that acts as a GTP-hydrolysis-dependent molecular chaperone, activating the urease apoprotein by helping to assemble the nickel containing metallocenter of UreC. The UreE protein probably delivers the nickel.

The protein resides in the cytoplasm. Functionally, required for maturation of urease via the functional incorporation of the urease nickel metallocenter. The protein is Urease accessory protein UreF of Helicobacter pylori (strain ATCC 700392 / 26695) (Campylobacter pylori).